A 275-amino-acid chain; its full sequence is Adenylate kinase (275 aa).

54-59 (GAGKGT) serves as a coordination point for ATP. The interval 74-103 (ATGDMLRSQVAKKTPLGREAKKIMDQGGLV) is NMP. Residues Thr-75, Arg-80, 101–103 (GLV), 130–133 (GFPR), and Gln-137 each bind AMP. Residues 171-208 (GRLVHPASGRSYHRVFNPPKADMKDDITGEPLVSRSDD) form an LID region. ATP contacts are provided by residues Arg-172 and 181 to 182 (SY). AMP is bound by residues Arg-205 and Arg-216. Gln-244 contacts ATP.

It belongs to the adenylate kinase family. AK2 subfamily. In terms of assembly, monomer.

The protein resides in the cytoplasm. The protein localises to the cytosol. Its subcellular location is the mitochondrion intermembrane space. It catalyses the reaction AMP + ATP = 2 ADP. Its function is as follows. Catalyzes the reversible transfer of the terminal phosphate group between ATP and AMP. Plays an important role in cellular energy homeostasis and in adenine nucleotide metabolism. Adenylate kinase activity is critical for regulation of the phosphate utilization and the AMP de novo biosynthesis pathways. The sequence is that of Adenylate kinase (adk1) from Botryotinia fuckeliana (strain B05.10) (Noble rot fungus).